Consider the following 229-residue polypeptide: Nectarin-1 (229 aa).

An N-terminal signal peptide occupies residues 1–32 (MAAFGIKSKIFQIMEMTILFLFAISIDRYCFA). Cys-42 and Cys-57 are oxidised to a cystine. Asn-60 carries N-linked (GlcNAc...) asparagine glycosylation. The Cupin type-1 domain maps to 69 to 217 (FAISKPGATN…TFQINIEDVQ (149 aa)). Positions 117, 119, 124, and 163 each coordinate Mn(2+).

Belongs to the germin family. In terms of assembly, monomer. In the absence of manganese, it forms tetrameric and pentameric forms which show superoxide dismutase activity. Mn(2+) is required as a cofactor. Glycosylated.

Its subcellular location is the secreted. It localises to the extracellular space. It is found in the apoplast. The catalysed reaction is 2 superoxide + 2 H(+) = H2O2 + O2. May interact with bacterial adhesins thereby protecting the reproductive tissues from microbial attack. Has no oxalate oxidase activity. This is Nectarin-1 (NEC1) from Nicotiana plumbaginifolia (Leadwort-leaved tobacco).